Consider the following 360-residue polypeptide: Ankyrin repeat domain-containing protein 2 (360 aa).

A may mediate interaction with PML, p53/TP53 and YBX1 region spans residues 5-120 (PSWAGVGALA…GIQNLIELRK (116 aa)). Position 99 is a phosphoserine; by PKB/AKT2 (serine 99). A disordered region spans residues 126–147 (KRDALAASHEPPPEPEEITGPV). The span at 138 to 147 (PEPEEITGPV) shows a compositional bias: acidic residues. ANK repeat units lie at residues 147-176 (VDEETFLKAAVEGKMKVIEKFLADGGSADT), 180-209 (FRRTALHRASLEGHMEILEKLLDNGATVDF), 213-242 (LDCTAMHWACRGGHLEVVKLLQSHGADTNV), 246-275 (LLSTPLHVAVRTGQVEIVEHFLSLGLEINA), and 279-308 (EGDTALHDAVRLNRYKIIKLLLLHGADMMT). Residues 330–342 (ALEHPEPGAEHNG) are compositionally biased toward basic and acidic residues. The segment at 330 to 360 (ALEHPEPGAEHNGLEGPNDSGRETPQPVPAQ) is disordered.

In terms of assembly, interacts with ID3; both proteins cooperate in myoblast differentiation. Interacts with TTN/titin. Interacts (via ANK repeats) with TCAP; the interaction is direct. Interacts with TJP1 (via PDZ domains). Interacts with PML; the interaction is direct. Interacts with p53/TP53. Interacts with YBX1. Interacts with AKT2. Post-translationally, phosphorylation at Ser-99 by PKB/AKT2 in response to oxidative stress induces translocation to the nucleus and negatively regulates myoblast differentiation. As to expression, mostly expressed in skeletal and cardiac muscles. Found in slow fibers. Also expressed in kidney, but to a lower extent (at protein level).

Its subcellular location is the cytoplasm. The protein resides in the myofibril. It is found in the sarcomere. The protein localises to the i band. It localises to the cytosol. Its subcellular location is the nucleus. The protein resides in the PML body. In terms of biological role, functions as a negative regulator of myocyte differentiation. May interact with both sarcoplasmic structural proteins and nuclear proteins to regulate gene expression during muscle development and in response to muscle stress. The protein is Ankyrin repeat domain-containing protein 2 (ANKRD2) of Homo sapiens (Human).